The chain runs to 1020 residues: Glucan endo-1,3-beta-D-glucosidase (1020 aa).

A signal peptide spans 1–25 (MKGKNVQLLFALVVIILLFPTGASA). The beta-sandwich subdomain stretch occupies residues 28-251 (HAVSVGKGSY…ADYIAIAKLP (224 aa)). Positions 28-722 (HAVSVGKGSY…HWIHNLAELG (695 aa)) constitute a GH81 domain. The segment at 252–350 (EKDGNMLAKF…EGKRFTTELT (99 aa)) is alpha/beta subdomain. Residues 360 to 722 (DLGDYDRERL…HWIHNLAELG (363 aa)) are (alpha/beta)6 barrel subdomain. (1,3-beta-D-glucosyl)n-binding residues include Tyr387, Lys391, His458, Asp466, His470, Asp530, Asn540, Glu542, Glu546, Glu699, and Arg704. Asp466 is a catalytic residue. Catalysis depends on residues Glu542 and Glu546. A disordered region spans residues 771 to 790 (HSFNIGNGDGPTNPDPSEPD). The region spanning 796–922 (ERIQAEAYDA…LMNVNWFVFR (127 aa)) is the CBM6 domain. 6 residues coordinate (1,3-beta-D-glucosyl)n: Glu812, Trp825, Asp853, Asn878, Asp912, and Asn915. In terms of domain architecture, CBM56 spans 928-1020 (NGDSHTHPDY…YTTEWFTYSR (93 aa)).

It belongs to the glycosyl hydrolase 81 family.

Its subcellular location is the secreted. It carries out the reaction Hydrolysis of (1-&gt;3)-beta-D-glucosidic linkages in (1-&gt;3)-beta-D-glucans.. In terms of biological role, cleaves internal linkages in 1,3-beta-glucan. May contribute to plant biomass degradation. This is Glucan endo-1,3-beta-D-glucosidase from Halalkalibacterium halodurans (strain ATCC BAA-125 / DSM 18197 / FERM 7344 / JCM 9153 / C-125) (Bacillus halodurans).